We begin with the raw amino-acid sequence, 333 residues long: MKNKYNLLFFLFLLCYGDVALAACTGKLKISPGYSGHTYSFDSSIPNNSNIARYLVEISEKIVCDADQSGWDGKRYAQLHLYSSGALCESVSGDGITFRSNVSGLSWRFPNGIPYHCAAGQINLGGIKYADRNGKVTWNPGELRHEIFLRVDNRFDFSKSRTFSVNTISGRGGLGGDSSVVIPLIGSSFNYSYSNIATCTLTGPSEVNFNTVTTSDVLKGTTHRDLNLRAECRNRGASLGLNFKFEPQYKDVSANKQGVFYAKNTSGSLTYKLTKKADASAIPLNEFVKLIVEDKVNIHTGNTIPLLLTLQKGDGKIATGKIETFLNVTMEHM.

Residues 1–22 (MKNKYNLLFFLFLLCYGDVALA) form the signal peptide.

Three disulfide bonds are present.

The protein localises to the fimbrium. Functionally, minor component of K99 fimbriae. Is not required for binding of K99 fimbriae to the ganglioside receptor. May play a role in initiation, elongation and flexibility of the fimbriae. The protein is Protein FanF (fanF) of Escherichia coli.